The primary structure comprises 635 residues: Biosynthetic arginine decarboxylase (635 aa).

Lys-100 carries the post-translational modification N6-(pyridoxal phosphate)lysine. 282–292 (VDIGGGLGVDY) serves as a coordination point for substrate.

This sequence belongs to the Orn/Lys/Arg decarboxylase class-II family. SpeA subfamily. The cofactor is Mg(2+). Pyridoxal 5'-phosphate serves as cofactor.

It carries out the reaction L-arginine + H(+) = agmatine + CO2. It functions in the pathway amine and polyamine biosynthesis; agmatine biosynthesis; agmatine from L-arginine: step 1/1. Its function is as follows. Catalyzes the biosynthesis of agmatine from arginine. The polypeptide is Biosynthetic arginine decarboxylase (Geobacter metallireducens (strain ATCC 53774 / DSM 7210 / GS-15)).